A 493-amino-acid chain; its full sequence is MSNRQIKSDVILIGAGIMSATLGTILKELAPDWKITVFEKLEKAGEESSHELNNAGTGHAALCELNYTSEKKDGSIDIKKAINVNEQFQVSRQFWSYLVNNKLINNPQDFIMPLPHMSLVQGKENVEFLKKRHETMIQNPLFEGMEFSNDPETLKKWIPLIMENRPAGEDIAATKIDTGTDVNFGALTRMLIDHLKAKDVDVNYNHSVESLKQASDGSWEVRVHDLDGCKMEYHSAKFVFLGAGGGSLELLQKSGIPEGKHIGGFPISGLFLACNNPEVAEQHHAKVYGKAKVGAPPMSVPHLDTRYIDNKKSLLFGPFAGFSPKFLKTGSNMDLFASVKPHNITTLLAAGVKEMGLTKYLIQQLMLSKEQRMEELREFIPNAKSDDWDIIVAGQRVQVIKDTEAGGKGTLQFGTEVVSAADGSIAALLGASPGASTAVHVMLEVINKCFPQHIKEWEAKIKEMIPSYGLSLAENPELLKEINATTDEALRLK.

The protein belongs to the MQO family. FAD serves as cofactor.

The enzyme catalyses (S)-malate + a quinone = a quinol + oxaloacetate. It participates in carbohydrate metabolism; tricarboxylic acid cycle; oxaloacetate from (S)-malate (quinone route): step 1/1. In Lysinibacillus sphaericus (strain C3-41), this protein is Probable malate:quinone oxidoreductase.